The following is a 378-amino-acid chain: Ribosomal RNA large subunit methyltransferase G (378 aa).

It belongs to the methyltransferase superfamily. RlmG family.

It is found in the cytoplasm. The enzyme catalyses guanosine(1835) in 23S rRNA + S-adenosyl-L-methionine = N(2)-methylguanosine(1835) in 23S rRNA + S-adenosyl-L-homocysteine + H(+). Functionally, specifically methylates the guanine in position 1835 (m2G1835) of 23S rRNA. The polypeptide is Ribosomal RNA large subunit methyltransferase G (Salmonella agona (strain SL483)).